We begin with the raw amino-acid sequence, 241 residues long: Cobalt transport protein CbiM (241 aa).

The signal sequence occupies residues methionine 1–alanine 23. The next 6 membrane-spanning stretches (helical) occupy residues glycine 29–isoleucine 49, methionine 66–valine 86, leucine 98–phenylalanine 118, isoleucine 121–methionine 141, valine 160–glutamine 180, and isoleucine 202–phenylalanine 222.

It belongs to the CbiM family. Forms an energy-coupling factor (ECF) transporter complex composed of an ATP-binding protein (A component, CbiO), a transmembrane protein (T component, CbiQ) and 2 possible substrate-capture proteins (S components, CbiM and CbiN) of unknown stoichimetry.

The protein resides in the cell membrane. Its pathway is cofactor biosynthesis; adenosylcobalamin biosynthesis. Part of the energy-coupling factor (ECF) transporter complex CbiMNOQ involved in cobalt import. This chain is Cobalt transport protein CbiM, found in Clostridium tetani (strain Massachusetts / E88).